A 517-amino-acid polypeptide reads, in one-letter code: Crotonobetaine/carnitine--CoA ligase (517 aa).

It belongs to the ATP-dependent AMP-binding enzyme family.

The enzyme catalyses 4-(trimethylamino)butanoate + ATP + CoA = 4-(trimethylamino)butanoyl-CoA + AMP + diphosphate. It catalyses the reaction crotonobetaine + ATP + CoA = crotonobetainyl-CoA + AMP + diphosphate. The catalysed reaction is (R)-carnitine + ATP + CoA = (R)-carnitinyl-CoA + AMP + diphosphate. The protein operates within amine and polyamine metabolism; carnitine metabolism. Functionally, catalyzes the transfer of CoA to carnitine, generating the initial carnitinyl-CoA needed for the CaiB reaction cycle. Also has activity toward crotonobetaine and gamma-butyrobetaine. The sequence is that of Crotonobetaine/carnitine--CoA ligase from Escherichia coli O45:K1 (strain S88 / ExPEC).